The chain runs to 203 residues: Octanoyltransferase (203 aa).

A BPL/LPL catalytic domain is found at I32–S203. Residues R71–H78, S138–G140, and G151–A153 each bind substrate. C169 acts as the Acyl-thioester intermediate in catalysis.

It belongs to the LipB family.

Its subcellular location is the cytoplasm. It carries out the reaction octanoyl-[ACP] + L-lysyl-[protein] = N(6)-octanoyl-L-lysyl-[protein] + holo-[ACP] + H(+). It participates in protein modification; protein lipoylation via endogenous pathway; protein N(6)-(lipoyl)lysine from octanoyl-[acyl-carrier-protein]: step 1/2. Functionally, catalyzes the transfer of endogenously produced octanoic acid from octanoyl-acyl-carrier-protein onto the lipoyl domains of lipoate-dependent enzymes. Lipoyl-ACP can also act as a substrate although octanoyl-ACP is likely to be the physiological substrate. The polypeptide is Octanoyltransferase (Buchnera aphidicola subsp. Baizongia pistaciae (strain Bp)).